A 756-amino-acid polypeptide reads, in one-letter code: Xylosyl- and glucuronyltransferase LARGE1 (756 aa).

The Cytoplasmic portion of the chain corresponds to 1–10 (MLGICRGRRK). The chain crosses the membrane as a helical; Signal-anchor for type II membrane protein span at residues 11-31 (FLAASLTLLCIPAITWIYLFA). Residues 32–756 (GSFEDGKPVS…LKYLTAENNS (725 aa)) lie on the Lumenal side of the membrane. Disordered regions lie at residues 43-64 (SPLESQAHSPRYTASSQRERES) and 82-108 (QLSLAQGQSPAHHRGNHSKTYSMEEGT). Positions 44-58 (PLESQAHSPRYTASS) are enriched in polar residues. Residues 53–95 (RYTASSQRERESLEVRVREVEEENRALRRQLSLAQGQSPAHHR) are a coiled coil. N-linked (GlcNAc...) asparagine glycosylation is found at N97, N122, and N148. The interval 138-413 (IHVAIVCAGY…FLEYDGNLLR (276 aa)) is xylosyltransferase activity. Residues D242 and D244 each coordinate Mn(2+). An N-linked (GlcNAc...) asparagine glycan is attached at N272. The glucuronyltransferase activity stretch occupies residues 414-756 (RELFGCPSET…LKYLTAENNS (343 aa)). 2 residues coordinate Mn(2+): D563 and D565.

It in the C-terminal section; belongs to the glycosyltransferase 49 family. The protein in the N-terminal section; belongs to the glycosyltransferase 8 family. As to quaternary structure, interacts with DAG1 (via the N-terminal domain of alpha-DAG1); the interaction increases binding of DAG1 to laminin. Interacts with B4GAT1. Mn(2+) is required as a cofactor. As to expression, ubiquitous. Highest expression in heart, diaphragm and brain, where it is especially found in cerebral cortex, hippocampus, and trigeminal ganglion.

The protein resides in the golgi apparatus membrane. It catalyses the reaction 3-O-[beta-D-GlcA-(1-&gt;3)-beta-D-Xyl-(1-&gt;4)-Rib-ol-P-Rib-ol-P-3-beta-D-GalNAc-(1-&gt;3)-beta-D-GlcNAc-(1-&gt;4)-(O-6-P-alpha-D-Man)]-Thr-[protein] + UDP-alpha-D-xylose = 3-O-[alpha-D-Xyl-(1-&gt;3)-beta-D-GlcA-(1-&gt;4)-beta-D-Xyl-(1-&gt;4)-Rib-ol-P-Rib-ol-P-3-beta-D-GalNAc-(1-&gt;3)-beta-D-GlcNAc-(1-&gt;4)-(O-6-P-alpha-D-Man)]-Thr-[protein] + UDP + H(+). The catalysed reaction is 3-O-{(1-&gt;[3)-alpha-D-Xyl-(1-&gt;3)-beta-D-GlcA-(1-&gt;](n)-4)-beta-D-Xyl-(1-&gt;4)-Rib-ol-P-Rib-ol-P-3-beta-D-GalNAc-(1-&gt;3)-beta-D-GlcNAc-(1-&gt;4)-O-6-P-alpha-D-Man}-L-Thr-[protein] + UDP-alpha-D-glucuronate = 3-O-{beta-D-GlcA-(1-&gt;[3)-alpha-D-Xyl-(1-&gt;3)-beta-D-GlcA-(1-&gt;](n)-4)-beta-D-Xyl-(1-&gt;4)-Rib-ol-P-Rib-ol-P-3-beta-D-GalNAc-(1-&gt;3)-beta-D-GlcNAc-(1-&gt;4)-O-6-P-alpha-D-Man}-L-Thr-[protein] + UDP + H(+). The enzyme catalyses 3-O-{beta-D-GlcA-(1-&gt;[3)-alpha-D-Xyl-(1-&gt;3)-beta-D-GlcA-(1-&gt;](n)-4)-beta-D-Xyl-(1-&gt;4)-Rib-ol-P-Rib-ol-P-3-beta-D-GalNAc-(1-&gt;3)-beta-D-GlcNAc-(1-&gt;4)-O-6-P-alpha-D-Man}-L-Thr-[protein] + UDP-alpha-D-xylose = 3-O-{(1-&gt;[3)-alpha-D-Xyl-(1-&gt;3)-beta-D-GlcA-(1-&gt;](n+1)-4)-beta-D-Xyl-(1-&gt;4)-Rib-ol-P-Rib-ol-P-3-beta-D-GalNAc-(1-&gt;3)-beta-D-GlcNAc-(1-&gt;4)-O-6-P-alpha-D-Man}-L-Thr-[protein] + UDP + H(+). It participates in protein modification; protein glycosylation. Functionally, bifunctional glycosyltransferase with both alpha-1,3-xylosyltransferase and beta-1,3-glucuronyltransferase activities involved in the maturation of alpha-dystroglycan (DAG1) by glycosylation leading to DAG1 binding to laminin G-like domain-containing extracellular proteins with high affinity. Elongates the glucuronyl-beta-1,4-xylose-beta disaccharide primer structure initiated by B4GAT1 by adding repeating units [-3-Xylose-alpha-1,3-GlcA-beta-1-] to produce a heteropolysaccharide. Requires the phosphorylation of core M3 (O-mannosyl trisaccharide) by POMK to elongate the glucuronyl-beta-1,4-xylose-beta disaccharide primer. Plays a key role in skeletal muscle function and regeneration. The chain is Xylosyl- and glucuronyltransferase LARGE1 from Mus musculus (Mouse).